Reading from the N-terminus, the 24-residue chain is Brevinin-1La (24 aa).

The cysteines at positions 18 and 24 are disulfide-linked.

As to expression, expressed by the skin glands.

The protein localises to the secreted. Antibacterial activity against Gram-positive bacterium S.aureus and Gram-negative bacterium E.coli. This is Brevinin-1La from Rana luteiventris (Columbia spotted frog).